A 307-amino-acid polypeptide reads, in one-letter code: Aspartate carbamoyltransferase catalytic subunit (307 aa).

Arginine 54 and threonine 55 together coordinate carbamoyl phosphate. Position 83 (lysine 83) interacts with L-aspartate. Carbamoyl phosphate is bound by residues arginine 104, histidine 132, and glutamine 135. Arginine 165 and arginine 228 together coordinate L-aspartate. The carbamoyl phosphate site is built by leucine 267 and proline 268.

The protein belongs to the aspartate/ornithine carbamoyltransferase superfamily. ATCase family. In terms of assembly, heterododecamer (2C3:3R2) of six catalytic PyrB chains organized as two trimers (C3), and six regulatory PyrI chains organized as three dimers (R2).

It catalyses the reaction carbamoyl phosphate + L-aspartate = N-carbamoyl-L-aspartate + phosphate + H(+). It participates in pyrimidine metabolism; UMP biosynthesis via de novo pathway; (S)-dihydroorotate from bicarbonate: step 2/3. Its function is as follows. Catalyzes the condensation of carbamoyl phosphate and aspartate to form carbamoyl aspartate and inorganic phosphate, the committed step in the de novo pyrimidine nucleotide biosynthesis pathway. The sequence is that of Aspartate carbamoyltransferase catalytic subunit from Clostridium acetobutylicum (strain ATCC 824 / DSM 792 / JCM 1419 / IAM 19013 / LMG 5710 / NBRC 13948 / NRRL B-527 / VKM B-1787 / 2291 / W).